The following is a 148-amino-acid chain: uncharacterized protein (148 aa).

The next 3 helical transmembrane spans lie at 25 to 45, 85 to 105, and 118 to 138; these read FCTV…LLTA, IVRF…LLYL, and LAAT…WVFG.

The protein belongs to the GtrA family.

Its subcellular location is the cell membrane. This is an uncharacterized protein from Bacillus subtilis (strain 168).